The sequence spans 288 residues: MASITGQLSPMYINNVNTRSAYQPYIPVLERFDPRDLEVPKGVFVPLSGAMYFPTVHGMSLPQRRPLGLVQTGGLMSEPMTVDVVPGKLYTVLNTGCDTLRVGDHFMVQFPQPEDTDAQLRASKKPGTRRICNAASFNRMLPLWGGFMAVKKIDPIVPRELMHQLTRDVVTARSSELLYGLAGVYDLVEKTSAAARGVFKDIAEKKAVTKEEVVAAMTADQVDIFRKIVDEFSTMLNCVNFATIGMYHSSTLANPTPSLSQNQVWCNTDGVTEPGLQFHAFIKQFSGV.

This is an uncharacterized protein from Ictaluridae (bullhead catfishes).